Consider the following 376-residue polypeptide: Queuine tRNA-ribosyltransferase (376 aa).

Residue Asp-90 is the Proton acceptor of the active site. Substrate contacts are provided by residues 90-94, Asp-144, Gln-193, and Gly-220; that span reads DSGGF. The RNA binding stretch occupies residues 251–257; sequence GVGTPED. The Nucleophile role is filled by Asp-270. Positions 275 to 279 are RNA binding; important for wobble base 34 recognition; sequence TRNAR. Residues Cys-308, Cys-310, Cys-313, and His-339 each contribute to the Zn(2+) site.

The protein belongs to the queuine tRNA-ribosyltransferase family. In terms of assembly, homodimer. Within each dimer, one monomer is responsible for RNA recognition and catalysis, while the other monomer binds to the replacement base PreQ1. Requires Zn(2+) as cofactor.

The catalysed reaction is 7-aminomethyl-7-carbaguanine + guanosine(34) in tRNA = 7-aminomethyl-7-carbaguanosine(34) in tRNA + guanine. Its pathway is tRNA modification; tRNA-queuosine biosynthesis. Its function is as follows. Catalyzes the base-exchange of a guanine (G) residue with the queuine precursor 7-aminomethyl-7-deazaguanine (PreQ1) at position 34 (anticodon wobble position) in tRNAs with GU(N) anticodons (tRNA-Asp, -Asn, -His and -Tyr). Catalysis occurs through a double-displacement mechanism. The nucleophile active site attacks the C1' of nucleotide 34 to detach the guanine base from the RNA, forming a covalent enzyme-RNA intermediate. The proton acceptor active site deprotonates the incoming PreQ1, allowing a nucleophilic attack on the C1' of the ribose to form the product. After dissociation, two additional enzymatic reactions on the tRNA convert PreQ1 to queuine (Q), resulting in the hypermodified nucleoside queuosine (7-(((4,5-cis-dihydroxy-2-cyclopenten-1-yl)amino)methyl)-7-deazaguanosine). This Cupriavidus taiwanensis (strain DSM 17343 / BCRC 17206 / CCUG 44338 / CIP 107171 / LMG 19424 / R1) (Ralstonia taiwanensis (strain LMG 19424)) protein is Queuine tRNA-ribosyltransferase.